Here is a 176-residue protein sequence, read N- to C-terminus: Lipoprotein signal peptidase (176 aa).

4 helical membrane passes run Leu-26–Val-46, Phe-60–Gly-80, Trp-82–Leu-102, and Gly-107–Val-127. Residues Asp-137 and Asp-155 contribute to the active site. Residues His-147 to Val-167 form a helical membrane-spanning segment.

The protein belongs to the peptidase A8 family.

It localises to the cell inner membrane. It carries out the reaction Release of signal peptides from bacterial membrane prolipoproteins. Hydrolyzes -Xaa-Yaa-Zaa-|-(S,diacylglyceryl)Cys-, in which Xaa is hydrophobic (preferably Leu), and Yaa (Ala or Ser) and Zaa (Gly or Ala) have small, neutral side chains.. The protein operates within protein modification; lipoprotein biosynthesis (signal peptide cleavage). This protein specifically catalyzes the removal of signal peptides from prolipoproteins. The polypeptide is Lipoprotein signal peptidase (Cupriavidus pinatubonensis (strain JMP 134 / LMG 1197) (Cupriavidus necator (strain JMP 134))).